The chain runs to 314 residues: MLLLADMDVVNQLVAGGQFRVVKEPLGFVKVLQWVFAIFAFATCGSYTGELRLSVECANKTESALNIEVEFEYPFRLHQVYFDAPSCVKGGTTKIFLVGDYSSSAEFFVTVAVFAFLYSMGALATYIFLQNKYRENNKGPMMDFLATAVFAFMWLVSSSAWAKGLSDVKMATDPENIIKEMPMCRQTGNTCKELRDPVTSGLNTSVVFGFLNLVLWVGNLWFVFKETGWAAPFMRAPPGAPEKQPAPGDAYGDAGYGQGPGGYGPQDSYGPQGGYQPDYGQPASGGGGGYGPQGDYGQQGYGQQGAPTSFSNQM.

Topologically, residues 1–25 are cytoplasmic; sequence MLLLADMDVVNQLVAGGQFRVVKEP. Residues 21-228 enclose the MARVEL domain; that stretch reads VVKEPLGFVK…NLWFVFKETG (208 aa). Residues 26 to 49 form a helical membrane-spanning segment; sequence LGFVKVLQWVFAIFAFATCGSYTG. Topologically, residues 50 to 107 are vesicular; it reads ELRLSVECANKTESALNIEVEFEYPFRLHQVYFDAPSCVKGGTTKIFLVGDYSSSAEF. An N-linked (GlcNAc...) asparagine glycan is attached at N59. Y81 is modified (phosphotyrosine). A helical membrane pass occupies residues 108–131; it reads FVTVAVFAFLYSMGALATYIFLQN. Over 132–138 the chain is Cytoplasmic; it reads KYRENNK. Residues 139-162 traverse the membrane as a helical segment; the sequence is GPMMDFLATAVFAFMWLVSSSAWA. Over 163–200 the chain is Vesicular; the sequence is KGLSDVKMATDPENIIKEMPMCRQTGNTCKELRDPVTS. The chain crosses the membrane as a helical span at residues 201–224; that stretch reads GLNTSVVFGFLNLVLWVGNLWFVF. The Cytoplasmic segment spans residues 225-314; that stretch reads KETGWAAPFM…GAPTSFSNQM (90 aa). T227 is subject to Phosphothreonine. A disordered region spans residues 239-314; sequence GAPEKQPAPG…GAPTSFSNQM (76 aa). Positions 254–264 are enriched in gly residues; sequence AGYGQGPGGYG. The tract at residues 255-305 is repeats, Gly-rich; that stretch reads GYGQGPGGYGPQDSYGPQGGYQPDYGQPASGGGGGYGPQGDYGQQGYGQQG. Residues 265 to 282 show a composition bias toward low complexity; it reads PQDSYGPQGGYQPDYGQP. Residues Y279 and Y296 each carry the phosphotyrosine modification. Gly residues predominate over residues 283–303; the sequence is ASGGGGGYGPQGDYGQQGYGQ.

Belongs to the synaptophysin/synaptobrevin family. As to quaternary structure, homohexamer or homotetramer. Interacts with SRCIN1. Interacts with VAMP2; the interaction is inhibited by interaction of VAPM2 with SEPT8. Post-translationally, ubiquitinated; mediated by SIAH1 or SIAH2 and leading to its subsequent proteasomal degradation. In terms of processing, phosphorylated by SRC.

It localises to the cytoplasmic vesicle. It is found in the secretory vesicle. Its subcellular location is the synaptic vesicle membrane. The protein resides in the synapse. The protein localises to the synaptosome. Functionally, possibly involved in structural functions as organizing other membrane components or in targeting the vesicles to the plasma membrane. Involved in the regulation of short-term and long-term synaptic plasticity. The sequence is that of Synaptophysin (Syp) from Mus musculus (Mouse).